The chain runs to 201 residues: MAEKFTQHTGLVVPLDAANVDTDAIIPKQFLQKVTRTGFGAHLFNDWRFLDDQGQQPNPEFVLNFPEFKGASILLTRENFGCGSSREHAPWALTDYGFKVVIAPSFADIFYGNSFNNQLLPVTLSDAQVDEMFALVKANPGITFEVDLEAEVVKAGDKTYAFSIDAFRRHCMINGLDSIGLTLQHEDAIAAYENKQPAFMN.

It belongs to the LeuD family. LeuD type 1 subfamily. In terms of assembly, heterodimer of LeuC and LeuD.

It catalyses the reaction (2R,3S)-3-isopropylmalate = (2S)-2-isopropylmalate. It functions in the pathway amino-acid biosynthesis; L-leucine biosynthesis; L-leucine from 3-methyl-2-oxobutanoate: step 2/4. Functionally, catalyzes the isomerization between 2-isopropylmalate and 3-isopropylmalate, via the formation of 2-isopropylmaleate. This is 3-isopropylmalate dehydratase small subunit from Enterobacter sp. (strain 638).